The primary structure comprises 189 residues: Crossover junction endodeoxyribonuclease RuvC (189 aa).

Active-site residues include aspartate 11, glutamate 71, and aspartate 143. Mg(2+) is bound by residues aspartate 11, glutamate 71, and aspartate 143.

This sequence belongs to the RuvC family. As to quaternary structure, homodimer which binds Holliday junction (HJ) DNA. The HJ becomes 2-fold symmetrical on binding to RuvC with unstacked arms; it has a different conformation from HJ DNA in complex with RuvA. In the full resolvosome a probable DNA-RuvA(4)-RuvB(12)-RuvC(2) complex forms which resolves the HJ. Requires Mg(2+) as cofactor.

It localises to the cytoplasm. It catalyses the reaction Endonucleolytic cleavage at a junction such as a reciprocal single-stranded crossover between two homologous DNA duplexes (Holliday junction).. Functionally, the RuvA-RuvB-RuvC complex processes Holliday junction (HJ) DNA during genetic recombination and DNA repair. Endonuclease that resolves HJ intermediates. Cleaves cruciform DNA by making single-stranded nicks across the HJ at symmetrical positions within the homologous arms, yielding a 5'-phosphate and a 3'-hydroxyl group; requires a central core of homology in the junction. The consensus cleavage sequence is 5'-(A/T)TT(C/G)-3'. Cleavage occurs on the 3'-side of the TT dinucleotide at the point of strand exchange. HJ branch migration catalyzed by RuvA-RuvB allows RuvC to scan DNA until it finds its consensus sequence, where it cleaves and resolves the cruciform DNA. The polypeptide is Crossover junction endodeoxyribonuclease RuvC (Methylorubrum populi (strain ATCC BAA-705 / NCIMB 13946 / BJ001) (Methylobacterium populi)).